Reading from the N-terminus, the 155-residue chain is Nuclear cap-binding protein subunit 2 (155 aa).

MRNA is bound by residues tyrosine 19, tyrosine 42, 111–115 (RTDWD), 122–126 (RQYGR), and 132–133 (QV). The 79-residue stretch at 39–117 (NTLYVGNLSF…RIIRTDWDAG (79 aa)) folds into the RRM domain. The segment at 122–155 (RQYGRGKSGGQVRDEYRQDYDPARGGYGKVVSRP) is disordered. Basic and acidic residues predominate over residues 133–143 (VRDEYRQDYDP).

The protein belongs to the RRM NCBP2 family. Component of the nuclear cap-binding complex (CBC), a heterodimer composed of ncbp1/cbp80 and ncbp2/cbp20 that interacts with m7GpppG-capped RNA.

It is found in the nucleus. It localises to the cytoplasm. Its function is as follows. Component of the cap-binding complex (CBC), which binds co-transcriptionally to the 5' cap of pre-mRNAs and is involved in various processes such as pre-mRNA splicing, translation regulation, nonsense-mediated mRNA decay, RNA-mediated gene silencing (RNAi) by microRNAs (miRNAs) and mRNA export. The CBC complex is involved in mRNA export from the nucleus, leading to the recruitment of the mRNA export machinery to the 5' end of mRNA and to mRNA export in a 5' to 3' direction through the nuclear pore. The CBC complex is also involved in mediating U snRNA and intronless mRNAs export from the nucleus. The CBC complex is essential for a pioneer round of mRNA translation, before steady state translation when the CBC complex is replaced by cytoplasmic cap-binding protein eIF4E. The pioneer round of mRNA translation mediated by the CBC complex plays a central role in nonsense-mediated mRNA decay (NMD), NMD only taking place in mRNAs bound to the CBC complex, but not on eIF4E-bound mRNAs. The CBC complex enhances NMD in mRNAs containing at least one exon-junction complex (EJC), promoting the interaction between upf1 and upf2. The CBC complex is also involved in 'failsafe' NMD, which is independent of the EJC complex, while it does not participate in Staufen-mediated mRNA decay (SMD). During cell proliferation, the CBC complex is also involved in microRNAs (miRNAs) biogenesis via its interaction with srrt/ars2, thereby being required for miRNA-mediated RNA interference. The CBC complex also acts as a negative regulator of parn, thereby acting as an inhibitor of mRNA deadenylation. In the CBC complex, ncbp2/cbp20 recognizes and binds capped RNAs (m7GpppG-capped RNA) but requires ncbp1/cbp80 to stabilize the movement of its N-terminal loop and lock the CBC into a high affinity cap-binding state with the cap structure. The conventional cap-binding complex with NCBP2 binds both small nuclear RNA (snRNA) and messenger (mRNA) and is involved in their export from the nucleus. This Salmo salar (Atlantic salmon) protein is Nuclear cap-binding protein subunit 2 (ncbp2).